The sequence spans 1158 residues: Rho1 guanine nucleotide exchange factor 2 (1158 aa).

Residues 42–141 (RSSGSITHSP…SFSVSDVSNG (100 aa)) form a disordered region. Residues 45–63 (GSITHSPTALSSTTSLNEN) are compositionally biased toward polar residues. Residues 68-81 (FRPASSLSFSPSSL) are compositionally biased toward low complexity. Polar residues predominate over residues 97–108 (KNNFYRRSSSTD). A compositionally biased stretch (low complexity) spans 132–141 (SFSVSDVSNG). Positions 447-634 (KRQEIIFEVI…REFLTKLNYE (188 aa)) constitute a DH domain. The PH domain maps to 670-805 (LIFKGVVKLK…QHIEKQQDII (136 aa)). Residues S746 and S747 each carry the phosphoserine modification. Positions 825–1120 (GNKLLCAVAY…KLLTDGRGLI (296 aa)) constitute a CNH domain.

The protein localises to the cytoplasm. In terms of biological role, stimulates the exchange of Rho1 and Rho5 GDP-bound form into GTP-bound form. Controls septum formation, cell wall synthesis and localization of F-actin patches. In Schizosaccharomyces pombe (strain 972 / ATCC 24843) (Fission yeast), this protein is Rho1 guanine nucleotide exchange factor 2 (rgf2).